Here is a 246-residue protein sequence, read N- to C-terminus: 33kDa venom protein (246 aa).

Residues 1–20 (MAGKEVIFIMALFIAVESSP) form the signal peptide. Tandem repeats lie at residues 83–96 (GGAVSESVKQKRET), 97–110 (AESLSGSFDKEKAS), 111–124 (AENLSGSFDQQKSS), 125–138 (VDEKSGSVGQQKGA), 139–152 (VEGQSGSGEQRRET), 153–166 (AESQSGSVDQEKAS), and 167–180 (AENLSGSIDKQKVT). The segment at 83–243 (GGAVSESVKQ…SGSVGNDDDI (161 aa)) is 12 X approximate tandem repeats of [AV][DE]X[VL]SGSX[DE]QX[KR]X[ST]. The segment at 88-246 (ESVKQKRETA…VGNDDDISVQ (159 aa)) is disordered. Positions 112-123 (ENLSGSFDQQKS) are enriched in polar residues. Basic and acidic residues predominate over residues 175-186 (DKQKVTVEEKSE). Residues 181-187 (VEEKSEP) form an 8; half-length repeat. 4 consecutive repeat copies span residues 188–201 (AQGQSGSVKQKRKT), 202–215 (TENVSGSLDQEKAS), 216–229 (AESLSGSFDQQKSS), and 230–243 (VDEKSGSVGNDDDI). Residues 217–228 (ESLSGSFDQQKS) are compositionally biased toward polar residues.

As to expression, expressed by the venom gland.

The protein localises to the secreted. This is 33kDa venom protein from Chelonus sp. nr. curvimaculatus (Parasitic wasp).